The sequence spans 437 residues: Trigger factor (437 aa).

Positions Gly165–Ile251 constitute a PPIase FKBP-type domain.

The protein belongs to the FKBP-type PPIase family. Tig subfamily.

The protein localises to the cytoplasm. The enzyme catalyses [protein]-peptidylproline (omega=180) = [protein]-peptidylproline (omega=0). Its function is as follows. Involved in protein export. Acts as a chaperone by maintaining the newly synthesized protein in an open conformation. Functions as a peptidyl-prolyl cis-trans isomerase. The polypeptide is Trigger factor (Nitratiruptor sp. (strain SB155-2)).